Here is a 207-residue protein sequence, read N- to C-terminus: MHKIINHPLIKDKLTRMRKVSTVSTVFRTNLEELTQLMVYEATKDLELNEIEIETPVVKNAKGYKLKNKICLIPILRAGIGMVDGVKSLIPTATIGHIGLYRNEETLKPVEYFKKFPKNISESDVIILDPMLATGGSVVEAVNIIKKYNPKSIKFVCIVAAPEGLEYVQKIHPDVDVYIAALDDKLNENGYITPGLGDAGDRIFGTK.

Residues arginine 77, arginine 102, and 129–137 (DPMLATGGS) each bind 5-phospho-alpha-D-ribose 1-diphosphate. Residues isoleucine 192 and 197–199 (GDA) each bind uracil. Aspartate 198 is a binding site for 5-phospho-alpha-D-ribose 1-diphosphate.

This sequence belongs to the UPRTase family. It depends on Mg(2+) as a cofactor.

The catalysed reaction is UMP + diphosphate = 5-phospho-alpha-D-ribose 1-diphosphate + uracil. It participates in pyrimidine metabolism; UMP biosynthesis via salvage pathway; UMP from uracil: step 1/1. With respect to regulation, allosterically activated by GTP. Its function is as follows. Catalyzes the conversion of uracil and 5-phospho-alpha-D-ribose 1-diphosphate (PRPP) to UMP and diphosphate. This Ureaplasma urealyticum serovar 10 (strain ATCC 33699 / Western) protein is Uracil phosphoribosyltransferase.